Reading from the N-terminus, the 196-residue chain is dTDP-4-dehydro-6-deoxyglucose 3-epimerase (196 aa).

Residues Arg-21, Glu-26, 45–47 (QVN), and Arg-57 contribute to the substrate site. The active-site Proton acceptor is His-60. Substrate is bound by residues Lys-70 and Arg-117. Tyr-130 (proton donor) is an active-site residue. Substrate-binding residues include Glu-141 and Arg-166.

It belongs to the dTDP-4-dehydrorhamnose 3,5-epimerase family. As to quaternary structure, homodimer.

The enzyme catalyses dTDP-4-dehydro-6-deoxy-alpha-D-glucose = dTDP-4-dehydro-6-deoxy-alpha-D-allose. The protein operates within antibiotic biosynthesis. In terms of biological role, involved in the biosynthesis of dTDP-6-deoxy-D-allose, an intermediate in the biosynthesis of mycinose, which is one of the two unusual sugars attached to the 16-membered macrolactone ring of the aglycone antibiotic dihydrochalcomycin (GERI-155). Catalyzes the conversion of dTDP-4-oxo-6-deoxyglucose to dTDP-4-oxo-6-deoxyallose, via a C-3 epimerization. The protein is dTDP-4-dehydro-6-deoxyglucose 3-epimerase of Streptomyces sp.